Reading from the N-terminus, the 425-residue chain is Serine--tRNA ligase (425 aa).

Thr230–Glu232 is an L-serine binding site. Arg261–Glu263 contributes to the ATP binding site. Residue Glu284 participates in L-serine binding. Glu348–Ser351 is an ATP binding site. Residue Ser384 coordinates L-serine.

The protein belongs to the class-II aminoacyl-tRNA synthetase family. Type-1 seryl-tRNA synthetase subfamily. Homodimer. The tRNA molecule binds across the dimer.

It is found in the cytoplasm. The catalysed reaction is tRNA(Ser) + L-serine + ATP = L-seryl-tRNA(Ser) + AMP + diphosphate + H(+). The enzyme catalyses tRNA(Sec) + L-serine + ATP = L-seryl-tRNA(Sec) + AMP + diphosphate + H(+). Its pathway is aminoacyl-tRNA biosynthesis; selenocysteinyl-tRNA(Sec) biosynthesis; L-seryl-tRNA(Sec) from L-serine and tRNA(Sec): step 1/1. Functionally, catalyzes the attachment of serine to tRNA(Ser). Is also able to aminoacylate tRNA(Sec) with serine, to form the misacylated tRNA L-seryl-tRNA(Sec), which will be further converted into selenocysteinyl-tRNA(Sec). The protein is Serine--tRNA ligase of Streptococcus pyogenes serotype M12 (strain MGAS2096).